The sequence spans 234 residues: Glycerol uptake facilitator protein (234 aa).

Helical transmembrane passes span 9–29 (FLGT…VVLP), 37–57 (GWIV…FVSG), 61–81 (PAYL…LPWA), 83–103 (VLPY…LVWL), 135–155 (LISE…LGLY), and 159–179 (AGIG…SLGG). An NPA 1 motif is present at residues 65-67 (NPA). Residues 186 to 188 (NPA) carry the NPA 2 motif. A helical membrane pass occupies residues 214–234 (WIPVVGPVIGAALAVLVFSLF).

This sequence belongs to the MIP/aquaporin (TC 1.A.8) family.

Its subcellular location is the cell membrane. The catalysed reaction is glycerol(in) = glycerol(out). Its function is as follows. Mediates glycerol diffusion across the cytoplasmic membrane via a pore-type mechanism. The polypeptide is Glycerol uptake facilitator protein (glpF) (Streptococcus pneumoniae serotype 4 (strain ATCC BAA-334 / TIGR4)).